Here is a 121-residue protein sequence, read N- to C-terminus: uncharacterized protein (121 aa).

3 helical membrane-spanning segments follow: residues 2-22 (VFVTIIIIINISYNIYNIYTI), 42-62 (FICIYVCISGGNMPLWAYILF), and 89-109 (IFFAFCCHHIWSLLPHHLSIF).

It is found in the membrane. This is an uncharacterized protein from Saccharomyces cerevisiae (strain ATCC 204508 / S288c) (Baker's yeast).